The primary structure comprises 295 residues: Homeobox protein XHOX-7.1 (295 aa).

Disordered stretches follow at residues arginine 75–leucine 115 and lysine 134–threonine 175. The segment covering serine 84–serine 97 has biased composition (polar residues). Low complexity predominate over residues serine 141 to proline 153. Over residues leucine 164–arginine 174 the composition is skewed to basic residues. The segment at residues asparagine 170–glutamine 229 is a DNA-binding region (homeobox).

Belongs to the Msh homeobox family.

The protein resides in the nucleus. This Xenopus laevis (African clawed frog) protein is Homeobox protein XHOX-7.1.